Reading from the N-terminus, the 365-residue chain is Flagellar P-ring protein (365 aa).

The N-terminal stretch at 1-19 (MFKALAGIVLALVATLAHA) is a signal peptide.

The protein belongs to the FlgI family. As to quaternary structure, the basal body constitutes a major portion of the flagellar organelle and consists of four rings (L,P,S, and M) mounted on a central rod.

The protein localises to the periplasm. It localises to the bacterial flagellum basal body. Assembles around the rod to form the L-ring and probably protects the motor/basal body from shearing forces during rotation. This is Flagellar P-ring protein from Salmonella heidelberg (strain SL476).